We begin with the raw amino-acid sequence, 457 residues long: UDP-N-acetylmuramate--L-alanyl-gamma-D-glutamyl-meso-2,6-diaminoheptandioate ligase (457 aa).

110 to 116 (GTHGKTT) contacts ATP.

Belongs to the MurCDEF family. Mpl subfamily. The cofactor is Mg(2+).

The protein resides in the secreted. It carries out the reaction UDP-N-acetyl-alpha-D-muramate + L-alanyl-gamma-D-glutamyl-meso-2,6-diaminopimelate + ATP = UDP-N-acetyl-alpha-D-muramoyl-L-alanyl-gamma-D-glutamyl-meso-2,6-diaminopimelate + ADP + phosphate + H(+). Its pathway is cell wall biogenesis; peptidoglycan recycling. In terms of biological role, reutilizes the intact tripeptide L-alanyl-gamma-D-glutamyl-meso-diaminopimelate by linking it to UDP-N-acetylmuramate. The enzyme can also use the tetrapeptide L-alanyl-gamma-D-glutamyl-meso-2,6-diaminoheptanedioyl-D-alanine or the pentapeptide L-alanyl-gamma-D-glutamyl-meso-2,6-diaminoheptandioyl-D-alanyl-D-alanine in vivo and in vitro. The chain is UDP-N-acetylmuramate--L-alanyl-gamma-D-glutamyl-meso-2,6-diaminoheptandioate ligase from Escherichia coli (strain K12).